The sequence spans 783 residues: Spindle pole body protein ppc89 (783 aa).

Phosphoserine is present on serine 157. Disordered regions lie at residues 180-216 (FDSP…ETPS), 434-458 (KESN…MNEA), 471-504 (ENKS…PTSG), and 528-610 (LSQS…MKGN). Polar residues-rich tracts occupy residues 201 to 216 (RSKT…ETPS), 437 to 453 (NVTS…SKPL), and 474 to 504 (SGAN…PTSG). A compositionally biased stretch (basic residues) spans 536–551 (PVKHRKRRPKSKRRIT). A compositionally biased stretch (acidic residues) spans 566–590 (ESDEGSEEISLDSEYSDILSDDGDF).

It localises to the cytoplasm. The protein resides in the cytoskeleton. The protein localises to the microtubule organizing center. It is found in the spindle pole body. Has a role in meiosis. The polypeptide is Spindle pole body protein ppc89 (ppc89) (Schizosaccharomyces pombe (strain 972 / ATCC 24843) (Fission yeast)).